A 345-amino-acid polypeptide reads, in one-letter code: ATP-dependent (S)-NAD(P)H-hydrate dehydratase (345 aa).

Positions 9 to 332 (ILSLARSMIP…DMVGEVYEEV (324 aa)) constitute a YjeF C-terminal domain. Residues Gly113 and 170 to 176 (NVMEFKR) each bind (6S)-NADPHX. ATP is bound by residues 208-212 (KGPSD) and 241-250 (GGLKRVGGQG). Asp251 provides a ligand contact to (6S)-NADPHX.

Belongs to the NnrD/CARKD family. Requires Mg(2+) as cofactor.

It localises to the cytoplasm. The catalysed reaction is (6S)-NADHX + ATP = ADP + phosphate + NADH + H(+). It catalyses the reaction (6S)-NADPHX + ATP = ADP + phosphate + NADPH + H(+). Catalyzes the dehydration of the S-form of NAD(P)HX at the expense of ATP, which is converted to ADP. Together with NAD(P)HX epimerase, which catalyzes the epimerization of the S- and R-forms, the enzyme allows the repair of both epimers of NAD(P)HX, a damaged form of NAD(P)H that is a result of enzymatic or heat-dependent hydration. The polypeptide is ATP-dependent (S)-NAD(P)H-hydrate dehydratase (Cryptococcus neoformans var. neoformans serotype D (strain JEC21 / ATCC MYA-565) (Filobasidiella neoformans)).